The chain runs to 124 residues: Small ribosomal subunit protein uS12 (124 aa).

Asp-89 bears the 3-methylthioaspartic acid mark.

Belongs to the universal ribosomal protein uS12 family. In terms of assembly, part of the 30S ribosomal subunit. Contacts proteins S8 and S17. May interact with IF1 in the 30S initiation complex.

Its function is as follows. With S4 and S5 plays an important role in translational accuracy. Functionally, interacts with and stabilizes bases of the 16S rRNA that are involved in tRNA selection in the A site and with the mRNA backbone. Located at the interface of the 30S and 50S subunits, it traverses the body of the 30S subunit contacting proteins on the other side and probably holding the rRNA structure together. The combined cluster of proteins S8, S12 and S17 appears to hold together the shoulder and platform of the 30S subunit. In Moorella thermoacetica (strain ATCC 39073 / JCM 9320), this protein is Small ribosomal subunit protein uS12.